We begin with the raw amino-acid sequence, 306 residues long: Transcription initiation factor IIB 2 (306 aa).

The TFIIB-type zinc-finger motif lies at Pro6–Glu37. Residues Cys10, Cys13, Cys29, and Cys32 each coordinate Zn(2+). 2 repeat units span residues Ser123–Leu206 and Glu217–Glu298.

This sequence belongs to the TFIIB family.

In terms of biological role, stabilizes TBP binding to an archaeal box-A promoter. Also responsible for recruiting RNA polymerase II to the pre-initiation complex (DNA-TBP-TFIIB). This Thermococcus kodakarensis (strain ATCC BAA-918 / JCM 12380 / KOD1) (Pyrococcus kodakaraensis (strain KOD1)) protein is Transcription initiation factor IIB 2.